Consider the following 333-residue polypeptide: Acyl-CoA wax alcohol acyltransferase 2 (333 aa).

Helical transmembrane passes span 15–35 (VFAV…VIAV), 38–58 (YLVV…WLAF), and 130–150 (IFPG…MPFL).

Belongs to the diacylglycerol acyltransferase family. As to quaternary structure, monomer. As to expression, highly expressed in skin, where it is primarily restricted to undifferentiated peripheral sebocytes. Also expressed at lower level in other tissues except pancreas.

It is found in the endoplasmic reticulum membrane. The catalysed reaction is a long chain fatty alcohol + a fatty acyl-CoA = a wax ester + CoA. It carries out the reaction all-trans-retinol + an acyl-CoA = an all-trans-retinyl ester + CoA. The enzyme catalyses an acyl-CoA + a 1,2-diacyl-sn-glycerol = a triacyl-sn-glycerol + CoA. It catalyses the reaction 11-cis-retinol + a fatty acyl-CoA = 11-cis-retinyl ester + CoA. The catalysed reaction is 9-cis-retinol + a fatty acyl-CoA = 9-cis-retinyl ester + CoA. It carries out the reaction 13-cis-retinol + a fatty acyl-CoA = 13-cis-retinyl ester + CoA. The enzyme catalyses a 1-acylglycerol + an acyl-CoA = a 1,2-diacylglycerol + CoA. It catalyses the reaction 1-O-alkylglycerol + an acyl-CoA = 1-O-alkyl-3-acylglycerol + CoA. The catalysed reaction is a 2-acylglycerol + an acyl-CoA = a 1,2-diacyl-sn-glycerol + CoA. It carries out the reaction 2-(9Z-octadecenoyl)-glycerol + hexadecanoyl-CoA = 1-hexadecanoyl-2-(9Z-octadecenoyl)-sn-glycerol + CoA. The enzyme catalyses 1,2-di-(9Z-octadecenoyl)-sn-glycerol + hexadecanoyl-CoA = 1,2-di-(9Z)-octadecenoyl-3-hexadecanoyl-sn-glycerol + CoA. It catalyses the reaction hexadecan-1-ol + hexadecanoyl-CoA = hexadecanyl hexadecanoate + CoA. The catalysed reaction is hexadecane-1,2-diol + hexadecanoyl-CoA = 2-hydroxyhexadecyl hexadecanoate + CoA. It carries out the reaction 9-cis-retinol + hexadecanoyl-CoA = 9-cis-retinyl hexadecanoate + CoA. The enzyme catalyses all-trans-retinol + hexadecanoyl-CoA = all-trans-retinyl hexadecanoate + CoA. It catalyses the reaction 1,2-di-(9Z-octadecenoyl)-sn-glycerol + (9Z)-octadecenoyl-CoA = 1,2,3-tri-(9Z-octadecenoyl)-glycerol + CoA. The catalysed reaction is hexadecan-1-ol + (9Z)-octadecenoyl-CoA = hexadecanyl (9Z)-octadecenoate + CoA. It carries out the reaction (9Z)-hexadecen-1-ol + (9Z)-octadecenoyl-CoA = 1-O-(9Z)-hexadecenyl (9Z)-octadecenoate + CoA. The enzyme catalyses octadecan-1-ol + (9Z)-octadecenoyl-CoA = 1-O-octadecyl (9Z)-octadecenoate + CoA. It catalyses the reaction (9Z)-octadecen-1-ol + (9Z)-octadecenoyl-CoA = 1-O-(9Z)-octadecenyl (9Z)-octadecenoate + CoA. The catalysed reaction is hexadecan-1-ol + (9Z)-hexadecenoyl-CoA = 1-O-hexadecyl (9Z)-hexadecenoate + CoA. It carries out the reaction hexadecan-1-ol + octadecanoyl-CoA = hexadecanyl octadecanoate + CoA. The enzyme catalyses 11-cis-retinol + hexadecanoyl-CoA = 11-cis-retinyl hexadecanoate + CoA. It catalyses the reaction 1-O-(9Z-octadecenyl)-glycerol + (9Z)-octadecenoyl-CoA = 1-O-(9Z-octadecyl)-3-(9Z-octadecenoyl)-glycerol + CoA. The catalysed reaction is 1-(9Z-octadecenoyl)-glycerol + (9Z)-octadecenoyl-CoA = 1,2-di-(9Z-octadecenoyl)-glycerol + CoA. It carries out the reaction 11-cis-retinol + tetradecanoyl-CoA = 11-cis-retinyl tetradecanoate + CoA. The enzyme catalyses 9-cis-retinol + tetradecanoyl-CoA = 9-cis-retinyl tetradecanoate + CoA. It catalyses the reaction 13-cis-retinol + tetradecanoyl-CoA = 13-cis-retinyl tetradecanoate + CoA. The catalysed reaction is all-trans-retinol + tetradecanoyl-CoA = all-trans-retinyl tetradecanoate + CoA. It carries out the reaction tetradecan-1-ol + tetradecanoyl-CoA = tetradecanyl tetradecanoate + CoA. With respect to regulation, 11-cis retinoids act as allosteric modulators of acyl-CoA retinol O-fatty-acyltransferase (ARAT) activity by suppressing esterification of 9-cis, 13-cis, or all-trans retinols concurrently increasing the enzyme specificity toward 11-cis isomer. Acyltransferase that catalyzes the formation of ester bonds between fatty alcohols and fatty acyl-CoAs to form wax monoesters. Shows a preference for medium chain acyl-CoAs from C12 to C16 in length and fatty alcohols shorter than C20, as the acyl donors and acceptors, respectively. Also possesses acyl-CoA retinol acyltransferase (ARAT) activity that preferentially esterifies 11-cis-retinol, a chromophore precursor of bleached opsin pigments in cone cells. Shows higher catalytic efficiency toward 11-cis-retinol versus 9-cis-retinol, 13-cis-retinol, and all-trans-retinol substrates. This chain is Acyl-CoA wax alcohol acyltransferase 2 (AWAT2), found in Homo sapiens (Human).